Reading from the N-terminus, the 65-residue chain is Large ribosomal subunit protein bL35 (65 aa).

It belongs to the bacterial ribosomal protein bL35 family.

This chain is Large ribosomal subunit protein bL35, found in Proteus mirabilis (strain HI4320).